A 375-amino-acid chain; its full sequence is Succinyl-diaminopimelate desuccinylase (375 aa).

His66 provides a ligand contact to Zn(2+). Residue Asp68 is part of the active site. Asp99 serves as a coordination point for Zn(2+). The active-site Proton acceptor is Glu133. Positions 134, 162, and 348 each coordinate Zn(2+).

It belongs to the peptidase M20A family. DapE subfamily. In terms of assembly, homodimer. The cofactor is Zn(2+). Co(2+) serves as cofactor.

The enzyme catalyses N-succinyl-(2S,6S)-2,6-diaminopimelate + H2O = (2S,6S)-2,6-diaminopimelate + succinate. The protein operates within amino-acid biosynthesis; L-lysine biosynthesis via DAP pathway; LL-2,6-diaminopimelate from (S)-tetrahydrodipicolinate (succinylase route): step 3/3. Functionally, catalyzes the hydrolysis of N-succinyl-L,L-diaminopimelic acid (SDAP), forming succinate and LL-2,6-diaminopimelate (DAP), an intermediate involved in the bacterial biosynthesis of lysine and meso-diaminopimelic acid, an essential component of bacterial cell walls. This Shigella boydii serotype 18 (strain CDC 3083-94 / BS512) protein is Succinyl-diaminopimelate desuccinylase.